We begin with the raw amino-acid sequence, 393 residues long: S-adenosylmethionine synthase (393 aa).

Glutamate 9 lines the Mg(2+) pocket. Residue histidine 15 participates in ATP binding. Glutamate 43 provides a ligand contact to K(+). Glutamate 56 and glutamine 99 together coordinate L-methionine. ATP-binding positions include 167 to 169 (DGK), 235 to 238 (SGRF), aspartate 246, 252 to 253 (RK), alanine 269, lysine 273, and lysine 277. Residue aspartate 246 participates in L-methionine binding. Lysine 277 is an L-methionine binding site.

This sequence belongs to the AdoMet synthase family. In terms of assembly, homotetramer. The cofactor is Mn(2+). Requires Mg(2+) as cofactor. It depends on Co(2+) as a cofactor. K(+) serves as cofactor.

It localises to the cytoplasm. The enzyme catalyses L-methionine + ATP + H2O = S-adenosyl-L-methionine + phosphate + diphosphate. The protein operates within amino-acid biosynthesis; S-adenosyl-L-methionine biosynthesis; S-adenosyl-L-methionine from L-methionine: step 1/1. Catalyzes the formation of S-adenosylmethionine from methionine and ATP. The reaction comprises two steps that are both catalyzed by the same enzyme: formation of S-adenosylmethionine (AdoMet) and triphosphate, and subsequent hydrolysis of the triphosphate. The polypeptide is S-adenosylmethionine synthase (SAMS) (Brassica rapa subsp. pekinensis (Chinese cabbage)).